Reading from the N-terminus, the 252-residue chain is Ribonuclease HII (252 aa).

In terms of domain architecture, RNase H type-2 spans 41–232 (LLVAGVDEAG…VRLALEGREQ (192 aa)). A divalent metal cation contacts are provided by Asp-47, Glu-48, and Asp-140.

The protein belongs to the RNase HII family. Mn(2+) serves as cofactor. Requires Mg(2+) as cofactor.

It is found in the cytoplasm. The enzyme catalyses Endonucleolytic cleavage to 5'-phosphomonoester.. Endonuclease that specifically degrades the RNA of RNA-DNA hybrids. This chain is Ribonuclease HII, found in Xanthomonas oryzae pv. oryzae (strain KACC10331 / KXO85).